Consider the following 352-residue polypeptide: Protein MGF 360-9L (352 aa).

This sequence belongs to the asfivirus MGF 360 family. In terms of assembly, interacts with host STAT1; this interaction mediates STAT1 degradation through apoptosis. Interacts with host STAT2; this interaction mediates STAT2 degradation through the proteasome.

It localises to the host cytoplasm. In terms of biological role, plays a role in virus cell tropism, and may be required for efficient virus replication in macrophages. In addition, inhibits IFN-beta-induced IFN-stimulated genes (ISGs) transcription. Mechanistically, degrades host STAT1 and STAT2 through apoptosis and ubiquitin-proteasome pathways respectively. The protein is Protein MGF 360-9L of Ornithodoros (relapsing fever ticks).